Reading from the N-terminus, the 139-residue chain is Peptide methionine sulfoxide reductase B4 (139 aa).

The residue at position 2 (A2) is an N-acetylalanine. In terms of domain architecture, MsrB spans E12–A133. Zn(2+) is bound by residues C51, C54, C97, and C100. Residues C69 and C122 are joined by a disulfide bond. The active-site Nucleophile is C122.

Belongs to the MsrB Met sulfoxide reductase family. The cofactor is Zn(2+).

Its subcellular location is the cytoplasm. The protein resides in the cytosol. It carries out the reaction L-methionyl-[protein] + [thioredoxin]-disulfide + H2O = L-methionyl-(R)-S-oxide-[protein] + [thioredoxin]-dithiol. Its function is as follows. Catalyzes the reduction of methionine sulfoxide (MetSO) to methionine in proteins. Plays a protective role against oxidative stress by restoring activity to proteins that have been inactivated by methionine oxidation. MSRB family specifically reduces the MetSO R-enantiomer. This chain is Peptide methionine sulfoxide reductase B4 (MSRB4), found in Arabidopsis thaliana (Mouse-ear cress).